We begin with the raw amino-acid sequence, 564 residues long: MQSFRQYRRMRRDLQESIKLHGPYAAAGDRHVQPTDDILEDADDARLEKGIHSMNGHGQSPYSTPGIVLHDGQRVTVPGVNLRRASEICERVNTKTLFIVGFDGPDDQLNPKNWSIGRKWATLGIVGTTGMLVGWASSIDSTVIKQGQEAFGVSEVAESLATALFLFAFGFGSLVAAPFSETVGRNPVYIATLSILMIFTMASGLAPNFGAQLAFRFLAGLFGCTPMTTFGGSMADIFDPMDRTYAFPVCCTLSFLGPFLAPMVGAFIGQSTHISWRWTEWCTLIMAALVTGAIFLFVPETYGPVLLQWKAKQLREITGDPRFMAEIELRQTSLVTRLMHSCSRPFHLFFREIMVALFTMYLVVVYIVLFGFLTGYEFIFGRTYGFTQGSVGLTFIGMNIGFLIAFAMVPHIYFSYKKRLQNAIENGHNGLPPEERLWFAMYGAPWLPISLFWMGWTSYPSISYWSPLVASVAFGFSVQGIFISTYQYLIDTYELFAASALVSATFFRYIAAGAMVIVSIPMYGNLGVHWSLTLLGCISVLMTPVPYIFYKYGHVIRQRNKKTP.

Residue asparagine 113 is glycosylated (N-linked (GlcNAc...) asparagine). A run of 12 helical transmembrane segments spans residues 120-140, 159-179, 187-207, 217-237, 249-269, 278-298, 353-373, 389-409, 437-457, 462-482, 500-520, and 530-550; these read WATL…SSID, SLAT…AAPF, PVYI…GLAP, FLAG…MADI, VCCT…AFIG, WTEW…FLFV, IMVA…FGFL, GSVG…FAMV, LWFA…MGWT, ISYW…QGIF, ALVS…IVSI, and WSLT…YIFY.

This sequence belongs to the major facilitator superfamily.

It is found in the cell membrane. In terms of biological role, MFS-type transporter; part of the gene cluster that mediates the biosynthesis of 5-hydroxy-2-hydroxymethyl-1,4-pyrone, also know as kojic acid, a by-product in the fermentation process of malting rice that acts as a chelation agent. Involved in the seretion of kojic acid. The sequence is that of MFS-type transporter kojT from Aspergillus flavus (strain ATCC 200026 / FGSC A1120 / IAM 13836 / NRRL 3357 / JCM 12722 / SRRC 167).